Reading from the N-terminus, the 501-residue chain is Growth/differentiation factor 5 (501 aa).

A signal peptide spans 1–27; it reads MRLPKLLTFLLWYLAWLDLEFICTVLG. The propeptide occupies 28 to 381; it reads APDLGQRPQG…YLFSQRRKRR (354 aa). Residues 29–169 form a disordered region; sequence PDLGQRPQGT…EPFRPPPITP (141 aa). Over residues 99-111 the composition is skewed to pro residues; sequence PRPGGPEPKPGHP. Residues 148-162 are compositionally biased toward basic and acidic residues; it reads KAREPGPPREPKEPF. A glycan (N-linked (GlcNAc...) asparagine) is linked at N189. The segment at 246–265 is disordered; that stretch reads PSDTAKPAAPGGGRAAQLKL. 3 disulfides stabilise this stretch: C400–C466, C429–C498, and C433–C500.

Belongs to the TGF-beta family. In terms of assembly, homodimer; disulfide-linked. Interacts with serine proteases, HTRA1 and HTRA3. Following LPS binding, may form a complex with CXCR4, HSP90AA1 and HSPA8. Interacts with high affinity with NOG; inhibits chondrogenesis. Interacts with high affinity with BMPR1B and lower affinity with BMPR1A; positively regulates chondrocyte differentiation and induces SMAD dependent signaling. Interacts with FBN1 (via N-terminal domain) and FBN2. Interacts with TGFBR3. Predominantly expressed in long bones during embryonic development. Expressed in monocytes (at protein level).

It is found in the secreted. Its subcellular location is the cell membrane. In terms of biological role, growth factor involved in bone and cartilage formation. During cartilage development regulates differentiation of chondrogenic tissue through two pathways. Firstly, positively regulates differentiation of chondrogenic tissue through its binding of high affinity with BMPR1B and of less affinity with BMPR1A, leading to induction of SMAD1-SMAD5-SMAD8 complex phosphorylation and then SMAD protein signaling transduction. Secondly, negatively regulates chondrogenic differentiation through its interaction with NOG. Required to prevent excessive muscle loss upon denervation. This function requires SMAD4 and is mediated by phosphorylated SMAD1/5/8. Binds bacterial lipopolysaccharide (LPS) and mediates LPS-induced inflammatory response, including TNF secretion by monocytes. The chain is Growth/differentiation factor 5 (GDF5) from Homo sapiens (Human).